The following is a 185-amino-acid chain: Ribosome-recycling factor (185 aa).

This sequence belongs to the RRF family.

The protein resides in the cytoplasm. Functionally, responsible for the release of ribosomes from messenger RNA at the termination of protein biosynthesis. May increase the efficiency of translation by recycling ribosomes from one round of translation to another. The polypeptide is Ribosome-recycling factor (Geobacillus sp. (strain WCH70)).